The following is a 322-amino-acid chain: Undecaprenyl-phosphate 4-deoxy-4-formamido-L-arabinose transferase (322 aa).

The Cytoplasmic portion of the chain corresponds to 1–235 (MFEIHPVKKV…TCLTTTPLRM (235 aa)). The helical transmembrane segment at 236–256 (LSLLGSIIAIGGFSIAVLLVI) threads the bilayer. Topologically, residues 257–269 (LRLTFGPQWAAEG) are periplasmic. The helical transmembrane segment at 270–290 (VFMLFAVLFTFIGAQFIGMGL) threads the bilayer. Residues 291-322 (LGEYIGRIYTDVRARPRYFVQQVIRPSSKENE) lie on the Cytoplasmic side of the membrane.

The protein belongs to the glycosyltransferase 2 family.

Its subcellular location is the cell inner membrane. It catalyses the reaction UDP-4-deoxy-4-formamido-beta-L-arabinose + di-trans,octa-cis-undecaprenyl phosphate = 4-deoxy-4-formamido-alpha-L-arabinopyranosyl di-trans,octa-cis-undecaprenyl phosphate + UDP. It participates in glycolipid biosynthesis; 4-amino-4-deoxy-alpha-L-arabinose undecaprenyl phosphate biosynthesis; 4-amino-4-deoxy-alpha-L-arabinose undecaprenyl phosphate from UDP-4-deoxy-4-formamido-beta-L-arabinose and undecaprenyl phosphate: step 1/2. Its pathway is bacterial outer membrane biogenesis; lipopolysaccharide biosynthesis. Functionally, catalyzes the transfer of 4-deoxy-4-formamido-L-arabinose from UDP to undecaprenyl phosphate. The modified arabinose is attached to lipid A and is required for resistance to polymyxin and cationic antimicrobial peptides. This Shigella flexneri serotype 5b (strain 8401) protein is Undecaprenyl-phosphate 4-deoxy-4-formamido-L-arabinose transferase.